We begin with the raw amino-acid sequence, 161 residues long: Phosphopantetheine adenylyltransferase (161 aa).

S10 provides a ligand contact to substrate. ATP is bound by residues 10–11 and H18; that span reads SF. 3 residues coordinate substrate: K42, A75, and R89. ATP contacts are provided by residues 90-92, E100, and 125-131; these read GLR and LSPISSS.

It belongs to the bacterial CoaD family. As to quaternary structure, homohexamer. It depends on Mg(2+) as a cofactor.

The protein localises to the cytoplasm. It catalyses the reaction (R)-4'-phosphopantetheine + ATP + H(+) = 3'-dephospho-CoA + diphosphate. The protein operates within cofactor biosynthesis; coenzyme A biosynthesis; CoA from (R)-pantothenate: step 4/5. Reversibly transfers an adenylyl group from ATP to 4'-phosphopantetheine, yielding dephospho-CoA (dPCoA) and pyrophosphate. The sequence is that of Phosphopantetheine adenylyltransferase from Streptococcus agalactiae serotype Ia (strain ATCC 27591 / A909 / CDC SS700).